The primary structure comprises 121 residues: Glycine cleavage system H protein (121 aa).

Residues 22–102 (IAWVGITKYA…DSSVWLFKAE (81 aa)) enclose the Lipoyl-binding domain. At Lys-63 the chain carries N6-lipoyllysine.

Belongs to the GcvH family. As to quaternary structure, the glycine cleavage system is composed of four proteins: P, T, L and H. (R)-lipoate serves as cofactor.

Functionally, the glycine cleavage system catalyzes the degradation of glycine. The H protein shuttles the methylamine group of glycine from the P protein to the T protein. The polypeptide is Glycine cleavage system H protein (Tropheryma whipplei (strain TW08/27) (Whipple's bacillus)).